Here is a 122-residue protein sequence, read N- to C-terminus: Large ribosomal subunit protein uL14 (122 aa).

Belongs to the universal ribosomal protein uL14 family. Part of the 50S ribosomal subunit. Forms a cluster with proteins L3 and L19. In the 70S ribosome, L14 and L19 interact and together make contacts with the 16S rRNA in bridges B5 and B8.

Its function is as follows. Binds to 23S rRNA. Forms part of two intersubunit bridges in the 70S ribosome. The polypeptide is Large ribosomal subunit protein uL14 (Neisseria meningitidis serogroup C (strain 053442)).